Consider the following 206-residue polypeptide: Thymidylate kinase (206 aa).

11–18 (GIDGAGKT) is an ATP binding site.

This sequence belongs to the thymidylate kinase family.

It carries out the reaction dTMP + ATP = dTDP + ADP. Phosphorylation of dTMP to form dTDP in both de novo and salvage pathways of dTTP synthesis. This is Thymidylate kinase from Burkholderia cenocepacia (strain ATCC BAA-245 / DSM 16553 / LMG 16656 / NCTC 13227 / J2315 / CF5610) (Burkholderia cepacia (strain J2315)).